Reading from the N-terminus, the 233-residue chain is Large ribosomal subunit protein uL1 (233 aa).

This sequence belongs to the universal ribosomal protein uL1 family. Part of the 50S ribosomal subunit.

Functionally, binds directly to 23S rRNA. The L1 stalk is quite mobile in the ribosome, and is involved in E site tRNA release. Its function is as follows. Protein L1 is also a translational repressor protein, it controls the translation of the L11 operon by binding to its mRNA. This is Large ribosomal subunit protein uL1 from Thermotoga petrophila (strain ATCC BAA-488 / DSM 13995 / JCM 10881 / RKU-1).